The chain runs to 154 residues: MKTVIFLALLGLAAAEFIEIGYKVCKSDGTVSQVKADGCELTVKDGKKVCLFKKGSRPIIQIAFKPSKDTDKLKTSVRAKVGGSAMVDFPQTNSDACTYGVKCPVSAGENQIFEQSISITENHPAGEVIQVNWQLTRPDSGKEVCIIFLAEIKE.

The signal sequence occupies residues 1 to 15 (MKTVIFLALLGLAAA). Cystine bridges form between cysteine 39–cysteine 50 and cysteine 97–cysteine 103.

Belongs to the NPC2 family.

The protein localises to the secreted. The sequence is that of Putative protein heh-1 (heh-1) from Caenorhabditis elegans.